Reading from the N-terminus, the 268-residue chain is Small ribosomal subunit protein uS3 (268 aa).

Positions 38–106 constitute a KH type-2 domain; that stretch reads IRKLLATGME…QVQLNILEVK (69 aa). Residues 217–268 form a disordered region; that stretch reads NTAAPAGDRPRRERPSRPRRSGATGTTATSTEAGRAATATADAPATEQNQEG. Positions 237–268 are enriched in low complexity; sequence SGATGTTATSTEAGRAATATADAPATEQNQEG.

This sequence belongs to the universal ribosomal protein uS3 family. As to quaternary structure, part of the 30S ribosomal subunit. Forms a tight complex with proteins S10 and S14.

Functionally, binds the lower part of the 30S subunit head. Binds mRNA in the 70S ribosome, positioning it for translation. This is Small ribosomal subunit protein uS3 from Rhodococcus erythropolis (strain PR4 / NBRC 100887).